The following is a 381-amino-acid chain: Probable tRNA sulfurtransferase (381 aa).

In terms of domain architecture, THUMP spans leucine 52–tyrosine 155. ATP contacts are provided by residues leucine 173–methionine 174, asparagine 198–phenylalanine 199, arginine 255, glycine 277, and glutamine 286.

The protein belongs to the ThiI family.

It localises to the cytoplasm. The catalysed reaction is [ThiI sulfur-carrier protein]-S-sulfanyl-L-cysteine + a uridine in tRNA + 2 reduced [2Fe-2S]-[ferredoxin] + ATP + H(+) = [ThiI sulfur-carrier protein]-L-cysteine + a 4-thiouridine in tRNA + 2 oxidized [2Fe-2S]-[ferredoxin] + AMP + diphosphate. The enzyme catalyses [ThiS sulfur-carrier protein]-C-terminal Gly-Gly-AMP + S-sulfanyl-L-cysteinyl-[cysteine desulfurase] + AH2 = [ThiS sulfur-carrier protein]-C-terminal-Gly-aminoethanethioate + L-cysteinyl-[cysteine desulfurase] + A + AMP + 2 H(+). Its pathway is cofactor biosynthesis; thiamine diphosphate biosynthesis. Its function is as follows. Catalyzes the ATP-dependent transfer of a sulfur to tRNA to produce 4-thiouridine in position 8 of tRNAs, which functions as a near-UV photosensor. Also catalyzes the transfer of sulfur to the sulfur carrier protein ThiS, forming ThiS-thiocarboxylate. This is a step in the synthesis of thiazole, in the thiamine biosynthesis pathway. The sulfur is donated as persulfide by IscS. This chain is Probable tRNA sulfurtransferase, found in Metamycoplasma arthritidis (strain 158L3-1) (Mycoplasma arthritidis).